The primary structure comprises 398 residues: Acetate kinase (398 aa).

Residue asparagine 8 participates in Mg(2+) binding. Lysine 15 is an ATP binding site. Arginine 92 lines the substrate pocket. Aspartate 149 serves as the catalytic Proton donor/acceptor. Residues 209–213, 283–285, and 331–335 each bind ATP; these read HLGNG, DFR, and GVGEN. Residue glutamate 385 coordinates Mg(2+).

The protein belongs to the acetokinase family. Homodimer. The cofactor is Mg(2+). Mn(2+) is required as a cofactor.

It is found in the cytoplasm. It catalyses the reaction acetate + ATP = acetyl phosphate + ADP. The protein operates within metabolic intermediate biosynthesis; acetyl-CoA biosynthesis; acetyl-CoA from acetate: step 1/2. Its function is as follows. Catalyzes the formation of acetyl phosphate from acetate and ATP. Can also catalyze the reverse reaction. The chain is Acetate kinase from Corynebacterium efficiens (strain DSM 44549 / YS-314 / AJ 12310 / JCM 11189 / NBRC 100395).